The following is a 2332-amino-acid chain: Genome polyprotein (2332 aa).

Residues 1–201 enclose the Peptidase C28 domain; that stretch reads MNTTDCFIAL…WKAKVQRKLK (201 aa). Residues 1–1480 lie on the Cytoplasmic side of the membrane; that stretch reads MNTTDCFIAL…SFVKRAFKRL (1480 aa). Residues C51, H148, and D163 each act as for leader protease activity in the active site. 2 disordered regions span residues 197-218 and 238-265; these read QRKL…QSGN and QLGD…NTQN. A lipid anchor (N-myristoyl glycine; by host) is attached at G202. Polar residues-rich tracts occupy residues 204 to 218 and 238 to 251; these read GQSS…QSGN and QLGD…SNEG. Positions 252–265 are enriched in low complexity; it reads STDTTSTHTTNTQN. C406 and C858 are disulfide-bonded. The segment at 788–796 is antigenic epitope; sequence ALLRASTYY. A Cell attachment site motif is present at residues 869–871; that stretch reads RGD. Positions 1189–1353 constitute an SF3 helicase domain; sequence NVHIANLCKV…DGYKINSKLD (165 aa). Residue 1217–1224 participates in ATP binding; it reads GKSGQGKS. Residues 1481-1501 lie within the membrane without spanning it; sequence KENFEIVALCLTLLANIVIMI. The Cytoplasmic segment spans residues 1502-2332; it reads RETRKRQKMV…RWVNAVCGDA (831 aa). The segment covering 1529 to 1538 has biased composition (basic and acidic residues); sequence KTLDEAEKSP. Residues 1529–1584 are disordered; it reads KTLDEAEKSPLETSGASTVGFRERTLPGQKACDDVNSEPAQPVEEQPQAEGPYAGP. An O-(5'-phospho-RNA)-tyrosine mark is found at Y1581, Y1604, and Y1628. The Peptidase C3 domain maps to 1652-1848; that stretch reads APPTDLQKMV…YCSCVSRSML (197 aa). Catalysis depends on H1695, which acts as the For protease 3C activity; Proton donor/acceptor. Active-site for protease 3C activity residues include D1733 and C1812. Short sequence motifs (nuclear localization signal) lie at residues 1878 to 1886 and 1879 to 1886; these read MRKTKLAPT and RKTKLAPT. One can recognise a RdRp catalytic domain in the interval 2096–2214; that stretch reads RNVWDVDYSA…ASDYDLDFEA (119 aa). D2200 (for RdRp activity) is an active-site residue.

This sequence belongs to the picornaviruses polyprotein family. Interacts with host ISG15. In terms of assembly, interacts (via R-G-D motif) with host ITGAV/ITGB6. Interacts with host MAVS; this interaction inhibits binding of host TRAF3 to MAVS, thereby suppressing interferon-mediated responses. As to quaternary structure, forms homooligomers. Homohexamer. Interacts with host VIM. Interacts with host BECN1. In terms of assembly, interacts with host DCTN3. As to quaternary structure, interacts with RNA-dependent RNA polymerase; this interaction allows 3B-1 to binds 2 polymerases and act as a primer. It also allows the recruitment of the RNA-dependent RNA polymerase to host membranes. Interacts with RNA-dependent RNA polymerase; this interaction allows 3B-2 to act as a primer. In terms of assembly, interacts with RNA-dependent RNA polymerase; this interaction allows 3B-3 to act as a primer. As to quaternary structure, interacts with 3B-1; this interaction allows 3B-1 to binds 2 polymerases and act as a primer. It also allows the recruitment of the RNA-dependent RNA polymerase to host membranes. Interacts with 3B-2; this interaction allows 3B-2 to act as a primer. Interacts with 3B-3; this interaction allows 3B-3 to act as a primer. Removes six residues from its own C-terminus, generating sLb(pro). Post-translationally, specific enzymatic cleavages in vivo by the viral proteases yield a variety of precursors and mature proteins. The polyprotein seems to be cotranslationally cleaved at the 2A/2B junction by a ribosomal skip from one codon to the next without formation of a peptide bond. This process would release the L-P1-2A peptide from the translational complex. In terms of processing, during virion maturation, immature virions are rendered infectious following cleavage of VP0 into VP4 and VP2. This maturation seems to be an autocatalytic event triggered by the presence of RNA in the capsid and is followed by a conformational change of the particle. Myristoylation is required during RNA encapsidation and formation of the mature virus particle. Post-translationally, uridylylated by the polymerase and covalently linked to the 5'-end of genomic RNA. These uridylylated forms act as a nucleotide-peptide primer for the polymerase. In terms of processing, the disulfide bond between VP1 and VP2 occurs after release of virus from the host cell.

Its subcellular location is the host nucleus. It localises to the host cytoplasm. It is found in the virion. The protein localises to the host endoplasmic reticulum membrane. The protein resides in the host cytoplasmic vesicle membrane. The catalysed reaction is Autocatalytically cleaves itself from the polyprotein of the foot-and-mouth disease virus by hydrolysis of a Lys-|-Gly bond, but then cleaves host cell initiation factor eIF-4G at bonds -Gly-|-Arg- and -Lys-|-Arg-.. It catalyses the reaction a ribonucleoside 5'-triphosphate + H2O = a ribonucleoside 5'-diphosphate + phosphate + H(+). The enzyme catalyses RNA(n) + a ribonucleoside 5'-triphosphate = RNA(n+1) + diphosphate. It carries out the reaction Selective cleavage of Gln-|-Gly bond in the poliovirus polyprotein. In other picornavirus reactions Glu may be substituted for Gln, and Ser or Thr for Gly.. In terms of biological role, autocatalytically cleaves itself from the polyprotein at the L/VP0 junction. Also cleaves the host translation initiation factors EIF4G1 and EIF4G3, in order to shut off the capped cellular mRNA transcription. Plays a role in counteracting host innate antiviral response using diverse mechanisms. Possesses a deubiquitinase activity acting on both 'Lys-48' and 'Lys-63'-linked polyubiquitin chains. In turn, inhibits the ubiquitination and subsequent activation of key signaling molecules of type I IFN response such as host RIGI, TBK1, TRAF3 and TRAF6. Inhibits host NF-kappa-B activity by inducing a decrease in RELA mRNA levels. Cleaves a peptide bond in the C-terminus of host ISG15, resulting in the damaging of this modifier that can no longer be attached to target proteins. Also cleaves host G3BP1 and G3BP2 in order to inhibit cytoplasmic stress granules assembly. Lies on the inner surface of the capsid shell. After binding to the host receptor, the capsid undergoes conformational changes. Capsid protein VP4 is released, capsid protein VP1 N-terminus is externalized, and together, they shape a pore in the host membrane through which the viral genome is translocated into the host cell cytoplasm. After genome has been released, the channel shrinks. Functionally, forms an icosahedral capsid of pseudo T=3 symmetry with capsid proteins VP1 and VP3. The capsid is composed of 60 copies of each capsid protein organized in the form of twelve pentamers and encloses the viral positive strand RNA genome. Upon acidifcation in the endosome, dissociates into pentamers. Its function is as follows. Forms an icosahedral capsid of pseudo T=3 symmetry with capsid proteins VP2 and VP3. The capsid is composed of 60 copies of each capsid protein organized in the form of twelve pentamers and encloses the viral positive strand RNA genome. Mediates cell entry by attachment to an integrin receptor, usually host ITGAV/ITGB6, via a conserved arginine-glycine-aspartic acid (R-G-D) motif. In addition, targets host MAVS to suppress type I IFN pathway. Upon acidifcation in the endosome, dissociates into pentamers. In terms of biological role, forms an icosahedral capsid of pseudo T=3 symmetry with capsid proteins VP0 and VP3. The capsid is composed of 60 copies of each capsid protein organized in the form of twelve pentamers and encloses the viral positive strand RNA genome. Upon acidifcation in the endosome, dissociates into pentamers. Mediates self-processing of the polyprotein by a translational effect termed 'ribosome skipping'. Mechanistically, 2A-mediated cleavage occurs between the C-terminal glycine and the proline of the downstream protein 2B. In the case of foot-and-mouth disease virus, the 2A oligopeptide is post-translationally 'trimmed' from the C-terminus of the upstream protein 1D by 3C proteinase. Functionally, plays an essential role in the virus replication cycle by acting as a viroporin. Creates a pore in the host endoplasmic reticulum and as a consequence releases Ca2+ in the cytoplasm of infected cell. In turn, high levels of cytoplasmic calcium may trigger membrane trafficking and transport of viral ER-associated proteins to viroplasms, sites of viral genome replication. Its function is as follows. Associates with and induces structural rearrangements of intracellular membranes. Triggers host autophagy by interacting with host BECN1 and thereby promotes viral replication. Participates in viral replication and interacts with host DHX9. Displays RNA-binding, nucleotide binding and NTPase activities. May play a role in virion morphogenesis and viral RNA encapsidation by interacting with the capsid protein VP3. In terms of biological role, plays important roles in virus replication, virulence and host range. Cooperates with host DDX56 to inhibit IRF3 nuclear translocation and subsequent type I interferon production. Covalently linked to the 5'-end of both the positive-strand and negative-strand genomic RNAs. Acts as a genome-linked replication primer. Functionally, cysteine protease that generates mature viral proteins from the precursor polyprotein. In addition to its proteolytic activity, binds to viral RNA and thus influences viral genome replication. RNA and substrate bind cooperatively to the protease. Its function is as follows. RNA-directed RNA polymerase 3D-POL replicates genomic and antigenomic RNA by recognizing replications specific signals. Covalently attaches UMP to a tyrosine of VPg, which is used to prime RNA synthesis. The positive stranded RNA genome is first replicated at virus induced membranous vesicles, creating a dsRNA genomic replication form. This dsRNA is then used as template to synthesize positive stranded RNA genomes. ss(+)RNA genomes are either translated, replicated or encapsidated. This Bos taurus (Bovine) protein is Genome polyprotein.